A 492-amino-acid polypeptide reads, in one-letter code: Sestrin-3 (492 aa).

Residues 62–243 (LVEEYSTSGR…VCDLANDNSI (182 aa)) form an N-terminal domain; may mediate the alkylhydroperoxide reductase activity region. Cys121 acts as the Cysteine sulfenic acid (-SOH) intermediate in catalysis. Residues 310-492 (PHSDFEDDVI…ALRAITRHLT (183 aa)) are C-terminal domain; mediates TORC1 regulation. Residues 386–389 (TYNT), Thr398, and Glu463 each bind L-leucine.

Belongs to the sestrin family. Interacts with the GATOR2 complex which is composed of MIOS, SEC13, SEH1L, WDR24 and WDR59; the interaction is not regulated by leucine. Interacts with RRAGA, RRAGB, RRAGC and RRAGD; may function as a guanine nucleotide dissociation inhibitor for RRAGs and regulate them. Interacts with the TORC2 complex; through RICTOR. Detected in liver and skeletal muscles.

It localises to the cytoplasm. The enzyme catalyses a hydroperoxide + L-cysteinyl-[protein] = S-hydroxy-L-cysteinyl-[protein] + an alcohol. Its function is as follows. May function as an intracellular leucine sensor that negatively regulates the TORC1 signaling pathway. May also regulate the insulin-receptor signaling pathway through activation of TORC2. This metabolic regulator may also play a role in protection against oxidative and genotoxic stresses. May prevent the accumulation of reactive oxygen species (ROS) through the alkylhydroperoxide reductase activity born by the N-terminal domain of the protein. The sequence is that of Sestrin-3 from Mus musculus (Mouse).